The following is a 70-amino-acid chain: Large ribosomal subunit protein bL31 (70 aa).

Zn(2+) is bound by residues Cys-16, Cys-18, Cys-37, and Cys-40.

It belongs to the bacterial ribosomal protein bL31 family. Type A subfamily. As to quaternary structure, part of the 50S ribosomal subunit. It depends on Zn(2+) as a cofactor.

In terms of biological role, binds the 23S rRNA. The chain is Large ribosomal subunit protein bL31 from Ectopseudomonas mendocina (strain ymp) (Pseudomonas mendocina).